The sequence spans 339 residues: MKPKSKVAESTAASCFLVMSLLCSCIIGDQMETNNEGLSYSYYEKTCPKVEEIVRSSLSSMFILDPTSPAALLRLMFHDCQVQGCDASILLEPIRDQQFTELDSAKNFGIRKRDLVGSIKTSLELECPKQVSCSDVIILAARDAVALTGGPLISVPLGRKDSLSTPSKHVADSELPPSTADVDTTLSLFANKGMTIEESVAIMGAHTIGVTHCNNVLSRFDNANATSENMDPRFQTFLRVACPEFSPTSQAAEATFVPNDQTSVIFDTAYYDDAIAGRGNLRIDSEIGADPRTRPFVEAFAADQDRFFNAFSSAFVKLSSYKVLTGNEGVIRSVCDKVD.

An N-terminal signal peptide occupies residues 1 to 28; it reads MKPKSKVAESTAASCFLVMSLLCSCIIG. Intrachain disulfides connect Cys-47/Cys-127, Cys-80/Cys-85, Cys-133/Cys-335, and Cys-213/Cys-242. His-78 (proton acceptor) is an active-site residue. Residues Asp-79, Val-82, Gly-84, Asp-86, and Ser-88 each coordinate Ca(2+). Residue Pro-176 participates in substrate binding. His-206 is a binding site for heme b. Residue Thr-207 participates in Ca(2+) binding. Residue Asn-224 is glycosylated (N-linked (GlcNAc...) asparagine). 3 residues coordinate Ca(2+): Asp-260, Thr-262, and Asp-267.

Belongs to the peroxidase family. Classical plant (class III) peroxidase subfamily. Heme b is required as a cofactor. Ca(2+) serves as cofactor.

It localises to the secreted. It carries out the reaction 2 a phenolic donor + H2O2 = 2 a phenolic radical donor + 2 H2O. Its function is as follows. Removal of H(2)O(2), oxidation of toxic reductants, biosynthesis and degradation of lignin, suberization, auxin catabolism, response to environmental stresses such as wounding, pathogen attack and oxidative stress. These functions might be dependent on each isozyme/isoform in each plant tissue. The chain is Peroxidase 29 (PER29) from Arabidopsis thaliana (Mouse-ear cress).